The chain runs to 260 residues: Carbonic anhydrase (260 aa).

The segment at 1–31 (MAHAWGYGPADGPESWAESFPIANGPRQSPI) is disordered. One can recognise an Alpha-carbonic anhydrase domain in the interval 3–259 (HAWGYGPADG…LKGRKVRASF (257 aa)). The active-site Proton acceptor is histidine 64. Positions 94, 96, and 119 each coordinate Zn(2+). Tyrosine 127 is an active-site residue. Residue 198 to 199 (TT) coordinates substrate.

The protein belongs to the alpha-carbonic anhydrase family. The cofactor is Zn(2+).

The enzyme catalyses hydrogencarbonate + H(+) = CO2 + H2O. Functionally, reversible hydration of carbon dioxide. The polypeptide is Carbonic anhydrase (cahz) (Danio rerio (Zebrafish)).